We begin with the raw amino-acid sequence, 187 residues long: Ribosome-recycling factor (187 aa).

It belongs to the RRF family.

The protein resides in the cytoplasm. Its function is as follows. Responsible for the release of ribosomes from messenger RNA at the termination of protein biosynthesis. May increase the efficiency of translation by recycling ribosomes from one round of translation to another. The protein is Ribosome-recycling factor of Methylobacterium radiotolerans (strain ATCC 27329 / DSM 1819 / JCM 2831 / NBRC 15690 / NCIMB 10815 / 0-1).